The primary structure comprises 120 residues: UPF0102 protein Daro_0503 (120 aa).

The tract at residues 1–20 (MQVKANDTTTARGREAEDRA) is disordered.

This sequence belongs to the UPF0102 family.

This is UPF0102 protein Daro_0503 from Dechloromonas aromatica (strain RCB).